The sequence spans 234 residues: 1-(5-phosphoribosyl)-5-[(5-phosphoribosylamino)methylideneamino] imidazole-4-carboxamide isomerase (234 aa).

Residue aspartate 9 is the Proton acceptor of the active site. Aspartate 131 serves as the catalytic Proton donor.

It belongs to the HisA/HisF family.

It is found in the cytoplasm. The enzyme catalyses 1-(5-phospho-beta-D-ribosyl)-5-[(5-phospho-beta-D-ribosylamino)methylideneamino]imidazole-4-carboxamide = 5-[(5-phospho-1-deoxy-D-ribulos-1-ylimino)methylamino]-1-(5-phospho-beta-D-ribosyl)imidazole-4-carboxamide. It functions in the pathway amino-acid biosynthesis; L-histidine biosynthesis; L-histidine from 5-phospho-alpha-D-ribose 1-diphosphate: step 4/9. In Staphylococcus aureus (strain JH1), this protein is 1-(5-phosphoribosyl)-5-[(5-phosphoribosylamino)methylideneamino] imidazole-4-carboxamide isomerase.